We begin with the raw amino-acid sequence, 231 residues long: Ribonuclease 3 (231 aa).

Residues 6 to 135 (AAMLKERFGI…FVGALYLDQG (130 aa)) enclose the RNase III domain. Mg(2+) is bound at residue glutamate 48. Aspartate 52 is a catalytic residue. Residues aspartate 121 and glutamate 124 each contribute to the Mg(2+) site. Glutamate 124 is a catalytic residue. The 70-residue stretch at 161–230 (DYKTTLQEYL…ARQAYSQLQQ (70 aa)) folds into the DRBM domain. The disordered stretch occupies residues 209-231 (WGHSKKEAEQSAARQAYSQLQQK). Polar residues predominate over residues 220–231 (AARQAYSQLQQK).

Belongs to the ribonuclease III family. Homodimer. The cofactor is Mg(2+).

The protein resides in the cytoplasm. The catalysed reaction is Endonucleolytic cleavage to 5'-phosphomonoester.. Functionally, digests double-stranded RNA. Involved in the processing of primary rRNA transcript to yield the immediate precursors to the large and small rRNAs (23S and 16S). Processes some mRNAs, and tRNAs when they are encoded in the rRNA operon. Processes pre-crRNA and tracrRNA of type II CRISPR loci if present in the organism. The sequence is that of Ribonuclease 3 from Lactiplantibacillus plantarum (strain ATCC BAA-793 / NCIMB 8826 / WCFS1) (Lactobacillus plantarum).